The primary structure comprises 277 residues: Antigen 1 (277 aa).

The signal sequence occupies residues 1-16 (MQLLALTLALCASIAA). N-linked (GlcNAc...) asparagine glycans are attached at residues Asn-41, Asn-71, Asn-127, and Asn-200. A disordered region spans residues 230–277 (CVGGEEENDGQGEEQTEEPAQDDQQDEAAEEEIPENCHTHEGGELHCT). Residues 233–263 (GEEENDGQGEEQTEEPAQDDQQDEAAEEEIP) show a composition bias toward acidic residues. Positions 264 to 277 (ENCHTHEGGELHCT) are enriched in basic and acidic residues.

Belongs to the ZPS1 family.

This Emericella nidulans (strain FGSC A4 / ATCC 38163 / CBS 112.46 / NRRL 194 / M139) (Aspergillus nidulans) protein is Antigen 1 (aspnd1).